The primary structure comprises 250 residues: 26 kDa periplasmic immunogenic protein (250 aa).

Residues 1-28 (MNTRASNFLAASFSTIMLVGAFSLPAFA) form the signal peptide.

The protein resides in the periplasm. The protein is 26 kDa periplasmic immunogenic protein (bp26) of Brucella abortus (strain S19).